Consider the following 377-residue polypeptide: Glutamate 5-kinase (377 aa).

An ATP-binding site is contributed by lysine 20. Positions 60, 147, and 159 each coordinate substrate. 179–180 (TD) contributes to the ATP binding site. In terms of domain architecture, PUA spans 285–363 (AGRLVIDDGA…DKVYQVLGEA (79 aa)).

It belongs to the glutamate 5-kinase family.

Its subcellular location is the cytoplasm. The enzyme catalyses L-glutamate + ATP = L-glutamyl 5-phosphate + ADP. The protein operates within amino-acid biosynthesis; L-proline biosynthesis; L-glutamate 5-semialdehyde from L-glutamate: step 1/2. Catalyzes the transfer of a phosphate group to glutamate to form L-glutamate 5-phosphate. The sequence is that of Glutamate 5-kinase from Acinetobacter baumannii (strain SDF).